The sequence spans 192 residues: MLISDRDIRRHLDSGRVRLEPSDPAMVQPASVDVRLDRWFRLFDNHKYAHIDPEQEQPELTRLVEVAPDEPFVLHPGEFVLGATYEKVTLPDDIAARLEGKSSLGRLGLLTHSTAGFIDPGFSGHVTLELSNMATLPIKLWPGSKVGQLCFFQLSSPTEHPYGSGAYGNRYQGQRGPTASRSHLNFHRTVIE.

Residues 101 to 106 (KSSLGR), Asp-119, 127 to 129 (TLE), Gln-148, Tyr-162, and Gln-174 contribute to the dCTP site. Glu-129 (proton donor/acceptor) is an active-site residue. Residues 165–184 (GAYGNRYQGQRGPTASRSHL) form a disordered region. Positions 171 to 183 (YQGQRGPTASRSH) are enriched in polar residues.

It belongs to the dCTP deaminase family. In terms of assembly, homotrimer.

It catalyses the reaction dCTP + 2 H2O = dUMP + NH4(+) + diphosphate. Its pathway is pyrimidine metabolism; dUMP biosynthesis; dUMP from dCTP: step 1/1. Functionally, bifunctional enzyme that catalyzes both the deamination of dCTP to dUTP and the hydrolysis of dUTP to dUMP without releasing the toxic dUTP intermediate. The sequence is that of dCTP deaminase, dUMP-forming from Kocuria rhizophila (strain ATCC 9341 / DSM 348 / NBRC 103217 / DC2201).